A 233-amino-acid polypeptide reads, in one-letter code: Probable fimbrial chaperone protein ElfD (233 aa).

The first 26 residues, 1 to 26 (MKTCITKGIVTVSLTAILLSCSSAWA), serve as a signal peptide directing secretion.

The protein belongs to the periplasmic pilus chaperone family.

The protein resides in the periplasm. Its function is as follows. Part of the elfADCG-ycbUVF fimbrial operon, which promotes adhesion of bacteria to different abiotic surfaces. Could be required for the biogenesis of the ElfA fimbriae. This is Probable fimbrial chaperone protein ElfD (elfD) from Escherichia coli (strain K12).